A 698-amino-acid chain; its full sequence is Phenylalanine aminomutase (L-beta-phenylalanine forming) (698 aa).

Y80 acts as the Proton donor/acceptor in catalysis. The segment at residues 175 to 177 (ASG) is a cross-link (5-imidazolinone (Ala-Gly)). S176 bears the 2,3-didehydroalanine (Ser) mark. (E)-cinnamate is bound by residues N231, Q319, R325, N355, K427, E455, and N458.

Belongs to the PAL/histidase family. In terms of assembly, homotetramer. Contains an active site 4-methylidene-imidazol-5-one (MIO), which is formed autocatalytically by cyclization and dehydration of residues Ala-Ser-Gly.

It localises to the cytoplasm. It carries out the reaction L-phenylalanine = L-beta-phenylalanine. The catalysed reaction is L-phenylalanine = (E)-cinnamate + NH4(+). Its pathway is alkaloid biosynthesis; taxol biosynthesis. It participates in phenylpropanoid metabolism; trans-cinnamate biosynthesis; trans-cinnamate from L-phenylalanine: step 1/1. In terms of biological role, phenylalanine aminomutase that catalyzes the rearrangement of L-phenylalanine to R-beta-phenylalanine. Catalyzes the first committed step in the biosynthesis of the side chain of the alkaloid taxol (paclitaxel), a widely-used compound with antitumor activity. Also has low phenylalanine ammonia-lyase activity. This is Phenylalanine aminomutase (L-beta-phenylalanine forming) (pam) from Taxus canadensis (Canadian yew).